The following is a 362-amino-acid chain: Beta-ketoacyl-[acyl-carrier-protein] synthase III 2 (362 aa).

Residues Cys113 and His251 contribute to the active site. Residues 252-256 are ACP-binding; sequence QANIR. Residue Asn281 is part of the active site.

Belongs to the thiolase-like superfamily. FabH family. As to quaternary structure, homodimer.

The protein localises to the cytoplasm. It catalyses the reaction malonyl-[ACP] + acetyl-CoA + H(+) = 3-oxobutanoyl-[ACP] + CO2 + CoA. The protein operates within lipid metabolism; fatty acid biosynthesis. Its function is as follows. Catalyzes the condensation reaction of fatty acid synthesis by the addition to an acyl acceptor of two carbons from malonyl-ACP. Catalyzes the first condensation reaction which initiates fatty acid synthesis and may therefore play a role in governing the total rate of fatty acid production. Possesses both acetoacetyl-ACP synthase and acetyl transacylase activities. Its substrate specificity determines the biosynthesis of branched-chain and/or straight-chain of fatty acids. In Vibrio vulnificus (strain CMCP6), this protein is Beta-ketoacyl-[acyl-carrier-protein] synthase III 2.